The chain runs to 354 residues: MQTLHALLRDIPAPDTDAMARAQQHIDGLLKPPGSLGRLEALAVQLAGMPGLNGTPQVGEKAMLVMCADHGVWDEGVAVSPKIVTAIQAANMTRGTTGVCVLAAQAGAKVHVIDVGIDAEPIPGVVNMRVARGCGNIAVGPAMSRSQAEVLLLEVIRYTCDLAQRGVTLFGVGELGMANTTPAAAMVSVFTGSDAKEVVGIGANLPPSRIDNKVDVVRRAIAINQPDPHDGIDVLSKVGGFDLVGMTGVMLGAARCGLPVLLDGFLSYSAALAACQIAPAVRSYLIPSHFSAEKGARIALAHLAMEPYLHMAMRLGEGSGAALAMPIVEAACAMFHNMGELAASNIVLPGEKQT.

The active-site Proton acceptor is the Glu-317.

The protein belongs to the CobT family. Homodimer.

It carries out the reaction 5,6-dimethylbenzimidazole + nicotinate beta-D-ribonucleotide = alpha-ribazole 5'-phosphate + nicotinate + H(+). The protein operates within nucleoside biosynthesis; alpha-ribazole biosynthesis; alpha-ribazole from 5,6-dimethylbenzimidazole: step 1/2. Functionally, catalyzes the synthesis of alpha-ribazole-5'-phosphate from nicotinate mononucleotide (NAMN) and 5,6-dimethylbenzimidazole (DMB). In Salmonella arizonae (strain ATCC BAA-731 / CDC346-86 / RSK2980), this protein is Nicotinate-nucleotide--dimethylbenzimidazole phosphoribosyltransferase.